Reading from the N-terminus, the 644-residue chain is Protein lin-9 (644 aa).

The disordered stretch occupies residues 1–77; that stretch reads MSSAVRSPRK…GRDSPSVNSL (77 aa). Positions 50 to 62 are enriched in basic residues; it reads SIKRTGSPKKSPA.

This sequence belongs to the lin-9 family. As to quaternary structure, component of the DRM complex, at least composed of lin-9, lin-35, lin-37, lin-52, lin-53, lin-54- dpl-1 and efl-1. Interacts with zft-11; the interaction is required to suppress the activation of non-neuronal genes in neurons.

It is found in the nucleus. Its function is as follows. Synthetic multivulva class B (synMuvB) protein. SynMuvB proteins are required to repress the induction of vulval development by Ras signaling and probably act by forming the multiprotein DRM complex that represses transcription. Required for the development of sheath cells in the hermaphrodite gonad and for the development of the male spicule, rays and gonad. In association with the zinc finger protein ztf-11, negatively regulates the expression of non-neuronal genes during neurogenesis. In Caenorhabditis elegans, this protein is Protein lin-9.